The chain runs to 111 residues: uncharacterized protein (111 aa).

The protein belongs to the asfivirus E111R family.

This is an uncharacterized protein from Ornithodoros (relapsing fever ticks).